Consider the following 265-residue polypeptide: Putative hydro-lyase PST_2764 (265 aa).

This sequence belongs to the D-glutamate cyclase family.

This chain is Putative hydro-lyase PST_2764, found in Stutzerimonas stutzeri (strain A1501) (Pseudomonas stutzeri).